The chain runs to 178 residues: Large ribosomal subunit protein uL6 (178 aa).

This sequence belongs to the universal ribosomal protein uL6 family. Part of the 50S ribosomal subunit.

Functionally, this protein binds to the 23S rRNA, and is important in its secondary structure. It is located near the subunit interface in the base of the L7/L12 stalk, and near the tRNA binding site of the peptidyltransferase center. This is Large ribosomal subunit protein uL6 from Campylobacter curvus (strain 525.92).